A 157-amino-acid chain; its full sequence is Transcriptional repressor NrdR (157 aa).

The segment at 3-34 is a zinc-finger region; it reads CPSCQNTDSRVLESRSADAGKCVRRRRECLNC. In terms of domain architecture, ATP-cone spans 49-139; it reads VTVIKRSNAK…VYRQFNGIED (91 aa).

Belongs to the NrdR family. The cofactor is Zn(2+).

Functionally, negatively regulates transcription of bacterial ribonucleotide reductase nrd genes and operons by binding to NrdR-boxes. This Prochlorococcus marinus (strain SARG / CCMP1375 / SS120) protein is Transcriptional repressor NrdR.